A 122-amino-acid polypeptide reads, in one-letter code: Large ribosomal subunit protein uL18 (122 aa).

Belongs to the universal ribosomal protein uL18 family. As to quaternary structure, part of the 50S ribosomal subunit; part of the 5S rRNA/L5/L18/L25 subcomplex. Contacts the 5S and 23S rRNAs.

This is one of the proteins that bind and probably mediate the attachment of the 5S RNA into the large ribosomal subunit, where it forms part of the central protuberance. This Agathobacter rectalis (strain ATCC 33656 / DSM 3377 / JCM 17463 / KCTC 5835 / VPI 0990) (Eubacterium rectale) protein is Large ribosomal subunit protein uL18.